The sequence spans 158 residues: Cyclic pyranopterin monophosphate synthase (158 aa).

Substrate-binding positions include 74–76 (MCH) and 112–113 (ME). Residue Asp127 is part of the active site.

This sequence belongs to the MoaC family. Homohexamer; trimer of dimers.

It carries out the reaction (8S)-3',8-cyclo-7,8-dihydroguanosine 5'-triphosphate = cyclic pyranopterin phosphate + diphosphate. It participates in cofactor biosynthesis; molybdopterin biosynthesis. In terms of biological role, catalyzes the conversion of (8S)-3',8-cyclo-7,8-dihydroguanosine 5'-triphosphate to cyclic pyranopterin monophosphate (cPMP). This is Cyclic pyranopterin monophosphate synthase from Thermoanaerobacter pseudethanolicus (strain ATCC 33223 / 39E) (Clostridium thermohydrosulfuricum).